Here is a 639-residue protein sequence, read N- to C-terminus: UvrABC system protein C (639 aa).

Residues 20–97 (ERSGVYRMFD…IKKFQPKFNI (78 aa)) form the GIY-YIG domain. In terms of domain architecture, UVR spans 207 to 242 (KELQENLSRKMEELSSQMRFEEAAEIRDRIKALSYV).

It belongs to the UvrC family. In terms of assembly, interacts with UvrB in an incision complex.

Its subcellular location is the cytoplasm. In terms of biological role, the UvrABC repair system catalyzes the recognition and processing of DNA lesions. UvrC both incises the 5' and 3' sides of the lesion. The N-terminal half is responsible for the 3' incision and the C-terminal half is responsible for the 5' incision. The polypeptide is UvrABC system protein C (Rickettsia rickettsii (strain Iowa)).